We begin with the raw amino-acid sequence, 253 residues long: Indole-3-glycerol phosphate synthase (253 aa).

Belongs to the TrpC family.

It carries out the reaction 1-(2-carboxyphenylamino)-1-deoxy-D-ribulose 5-phosphate + H(+) = (1S,2R)-1-C-(indol-3-yl)glycerol 3-phosphate + CO2 + H2O. It participates in amino-acid biosynthesis; L-tryptophan biosynthesis; L-tryptophan from chorismate: step 4/5. The chain is Indole-3-glycerol phosphate synthase from Bacillus thuringiensis (strain Al Hakam).